We begin with the raw amino-acid sequence, 142 residues long: Small ribosomal subunit protein eS6 (142 aa).

Residues 117 to 142 (EKPLDELAPKKEKKEGAAGGRAPAKK) are disordered. The segment covering 118 to 132 (KPLDELAPKKEKKEG) has biased composition (basic and acidic residues).

It belongs to the eukaryotic ribosomal protein eS6 family.

The sequence is that of Small ribosomal subunit protein eS6 from Methanocella arvoryzae (strain DSM 22066 / NBRC 105507 / MRE50).